The primary structure comprises 374 residues: Growth/differentiation factor 8 (374 aa).

The first 22 residues, 1–22 (MHFTQVLISLSVLIACGPVGYG), serve as a signal peptide directing secretion. Residues 23–265 (DITAHQQPST…ISEGPKRIRR (243 aa)) constitute a propeptide that is removed on maturation. N-linked (GlcNAc...) asparagine glycosylation is found at N72 and N274. 4 disulfides stabilise this stretch: C271–C281, C280–C339, C308–C371, and C312–C373.

It belongs to the TGF-beta family. In terms of assembly, homodimer; disulfide-linked. As to expression, predominantly expressed in muscle. At hatching, expression is strongest in the skin epithelium, and is also found in the retina and brain. From day 28, expressed in skeletal muscle. In the adult, highest expression is seen in the gastrointestinal tract, brain, muscle, heart and testis. Also expressed in the adult pharynx, kidney, spleen, liver, gill, eyes, skin, swim bladder and ovary.

It localises to the secreted. Acts specifically as a negative regulator of skeletal muscle growth. May down-regulate muscle-specific transcription factors such as myod and myog. The protein is Growth/differentiation factor 8 (mstnb) of Danio rerio (Zebrafish).